Consider the following 644-residue polypeptide: MYFQSFYFLALLLATAVYGQVASPELHSLSRRNWKKPPPFPSTNASYAPVIRSCDSSEIMVNSLPRGELPDLENDFIEKRLSNANEALTTFLQSKNTTADLDLSSIVGDNGPRLGIAVSGGGWRSMLFGGGALAALDSRSNETTLGGLLQSAHYITGADGGSWLLSSLAVNEFRTIQNISKSIWYTRLGIFFIEETHFGDLKNYYTNVVDEVNQKAAAGFNVSLTDYWGRAIARHFVGQLRGGPNLTYSSVQNASWFQTAEYPYPLIVTQGLTGGLPDGSNGTATNSSIYEISPYYLTSFDNNVRSYTPTQYLGTNYSNGTAVDGKCVTQFDNVGFLVGTSSTRYNEALIDVSLRQSRMSRRLGFTLRHMRINGSSVSFYPNPYTDATDIAGNATAVSEDIVDTPYLDLFDGGYDGQNIPIWPLLQPERKLDVVFAFDSSGDTSNFWPNGSSLVATYERVTQRASDAVYDVEDFVHVPTPETFVNLGLNANPTFFGCDGRNTTRGDVPVDHNTPPLVVYMPNTPWTMKSNLVDHRYRIANSEIQALIQNGFVATTQDNSTDFASCLACAVVQRSLERRNQSTSAACQQCFSQYCWNGTVDNTPVDDDSKNPTYNPAVKTSSASGVHANILLSFFVLLATLLVTA.

Positions 1 to 19 are cleaved as a signal peptide; the sequence is MYFQSFYFLALLLATAVYG. N-linked (GlcNAc...) asparagine glycosylation is found at N44, N96, N141, N178, N221, N245, N253, N281, N286, N316, N319, N373, N393, N449, N501, N558, N579, and N596. One can recognise a PLA2c domain in the interval 53–600; it reads SCDSSEIMVN…SQYCWNGTVD (548 aa).

Belongs to the lysophospholipase family.

It is found in the secreted. It catalyses the reaction a 1-acyl-sn-glycero-3-phosphocholine + H2O = sn-glycerol 3-phosphocholine + a fatty acid + H(+). Functionally, catalyzes the release of fatty acids from lysophospholipids. This chain is Probable lysophospholipase 2 (plb2), found in Schizosaccharomyces pombe (strain 972 / ATCC 24843) (Fission yeast).